The sequence spans 313 residues: uncharacterized protein (313 aa).

Position 29–61 (29–61) interacts with NADP(+); sequence ALVTGGGTGLGKAIATTFAHLGASVAIAARRLD.

The protein belongs to the short-chain dehydrogenases/reductases (SDR) family. 2,4-dienoyl-CoA reductase subfamily.

This is an uncharacterized protein from Caenorhabditis elegans.